Consider the following 284-residue polypeptide: AA14 family lytic polysaccharide monooxygenase B (284 aa).

An N-terminal signal peptide occupies residues 1–20 (MGYLSKLVTSVVFAIPLASA). N-linked (GlcNAc...) asparagine glycosylation is found at Asn42, Asn96, Asn142, and Asn183. An intrachain disulfide couples Cys197 to Cys218.

Belongs to the polysaccharide monooxygenase AA14 family. It depends on Cu(2+) as a cofactor.

Its subcellular location is the secreted. In terms of biological role, lytic polysaccharide monooxygenase (LPMO) that plays decomposes some specific network structures formed between cellulose and hemicellulose in the plant cell walls. Catalysis by LPMOs requires the reduction of the active-site copper from Cu(II) to Cu(I) by a reducing agent and H(2)O(2) or O(2) as a cosubstrate. This chain is AA14 family lytic polysaccharide monooxygenase B, found in Talaromyces rugulosus (Penicillium rugulosum).